We begin with the raw amino-acid sequence, 357 residues long: sn-glycerol-3-phosphate import ATP-binding protein UgpC (357 aa).

In terms of domain architecture, ABC transporter spans 4 to 235 (LKLQAVTKSY…PASLFVASFI (232 aa)). Residue 37–44 (GPSGCGKS) coordinates ATP.

Belongs to the ABC transporter superfamily. sn-glycerol-3-phosphate importer (TC 3.A.1.1.3) family. The complex is composed of two ATP-binding proteins (UgpC), two transmembrane proteins (UgpA and UgpE) and a solute-binding protein (UgpB).

It is found in the cell inner membrane. It carries out the reaction sn-glycerol 3-phosphate(out) + ATP + H2O = sn-glycerol 3-phosphate(in) + ADP + phosphate + H(+). Part of the ABC transporter complex UgpBAEC involved in sn-glycerol-3-phosphate (G3P) import. Responsible for energy coupling to the transport system. This Yersinia pestis bv. Antiqua (strain Antiqua) protein is sn-glycerol-3-phosphate import ATP-binding protein UgpC.